The sequence spans 234 residues: tRNA1(Val) (adenine(37)-N6)-methyltransferase (234 aa).

It belongs to the methyltransferase superfamily. tRNA (adenine-N(6)-)-methyltransferase family.

Its subcellular location is the cytoplasm. It carries out the reaction adenosine(37) in tRNA1(Val) + S-adenosyl-L-methionine = N(6)-methyladenosine(37) in tRNA1(Val) + S-adenosyl-L-homocysteine + H(+). In terms of biological role, specifically methylates the adenine in position 37 of tRNA(1)(Val) (anticodon cmo5UAC). This chain is tRNA1(Val) (adenine(37)-N6)-methyltransferase, found in Aliivibrio fischeri (strain ATCC 700601 / ES114) (Vibrio fischeri).